Consider the following 273-residue polypeptide: 5-deoxy-glucuronate isomerase (273 aa).

It belongs to the isomerase IolB family.

The enzyme catalyses 5-deoxy-D-glucuronate = 5-dehydro-2-deoxy-D-gluconate. It functions in the pathway polyol metabolism; myo-inositol degradation into acetyl-CoA; acetyl-CoA from myo-inositol: step 4/7. Involved in the isomerization of 5-deoxy-glucuronate (5DG) to 5-dehydro-2-deoxy-D-gluconate (DKG or 2-deoxy-5-keto-D-gluconate). This is 5-deoxy-glucuronate isomerase from Listeria monocytogenes serovar 1/2a (strain ATCC BAA-679 / EGD-e).